A 349-amino-acid polypeptide reads, in one-letter code: Outer membrane protein assembly factor BamC (349 aa).

The first 24 residues, 1 to 24 (MAILLQKSKVMKIAGMSLAMLLAA), serve as a signal peptide directing secretion. The N-palmitoyl cysteine moiety is linked to residue Cys25. Cys25 carries S-diacylglycerol cysteine lipidation.

The protein belongs to the BamC family. In terms of assembly, part of the Bam complex, which is composed of the outer membrane protein BamA, and four lipoproteins BamB, BamC, BamD and BamE.

The protein localises to the cell outer membrane. Functionally, part of the outer membrane protein assembly complex, which is involved in assembly and insertion of beta-barrel proteins into the outer membrane. In Photorhabdus asymbiotica subsp. asymbiotica (strain ATCC 43949 / 3105-77) (Xenorhabdus luminescens (strain 2)), this protein is Outer membrane protein assembly factor BamC.